We begin with the raw amino-acid sequence, 500 residues long: FAD-linked oxidoreductase srdI (500 aa).

The N-terminal stretch at 1–20 is a signal peptide; that stretch reads MHLSSSLLFTSALLAGGINA. Asn-47 carries N-linked (GlcNAc...) asparagine glycosylation. An FAD-binding PCMH-type domain is found at 69–241; sequence YRPPSYQAAI…TQATYKMHKS (173 aa). 2 N-linked (GlcNAc...) asparagine glycosylation sites follow: Asn-257 and Asn-282.

Belongs to the oxygen-dependent FAD-linked oxidoreductase family. Requires FAD as cofactor.

Its function is as follows. FAD-linked oxidoreductase; part of the gene cluster that mediates the biosynthesis of sordarial, a salicylic aldehyde structurally related to the phytotoxin pyriculol. The most interesting aspect of this pathway is formation of an aromatic product from the highly reducing polyketide synthase srdA. SrdA synthesizes a reduced polyketide chain from one molecule of acetyl-CoA and five molecules of malonyl-CoA. The polyketide chain is then reductively released as an aldehyde. The oxidoreductases srdC, srdD and srdE then oxidize one of the hydroxy groups to facilitate the intramolecular aldol condensation, followed by dehydration to yield a salicylic aldehyde. This aldehyde can undergo facile reduction by endogenous reductases to yield the alcohol 1-hydroxy-2-hydroxymethyl-3-pent-1,3-dienylbenzene. The flavin-dependent srdI counteract against the propensity of the aldehydes to be reduced under physiological conditions and is responsible for reoxidizing 1-hydroxy-2-hydroxymethyl-3-pent-1,3-dienylbenzene back to the salicylic aldehyde. This salicylic aldehyde is then selectively epoxidized by the cupin-domain-containing oxidoreductase srdB to yield the epoxide, which can be hydrolyzed stereoselectively by the hydrolase srdG to give the final product sordarial. This chain is FAD-linked oxidoreductase srdI, found in Neurospora crassa (strain ATCC 24698 / 74-OR23-1A / CBS 708.71 / DSM 1257 / FGSC 987).